The primary structure comprises 186 residues: FMN-dependent NADH:quinone oxidoreductase 1 (186 aa).

FMN is bound by residues 15–17 and 81–84; these read SVS and MYNF.

Belongs to the azoreductase type 1 family. In terms of assembly, homodimer. Requires FMN as cofactor.

The enzyme catalyses 2 a quinone + NADH + H(+) = 2 a 1,4-benzosemiquinone + NAD(+). It carries out the reaction N,N-dimethyl-1,4-phenylenediamine + anthranilate + 2 NAD(+) = 2-(4-dimethylaminophenyl)diazenylbenzoate + 2 NADH + 2 H(+). Functionally, quinone reductase that provides resistance to thiol-specific stress caused by electrophilic quinones. In terms of biological role, also exhibits azoreductase activity. Catalyzes the reductive cleavage of the azo bond in aromatic azo compounds to the corresponding amines. This Idiomarina loihiensis (strain ATCC BAA-735 / DSM 15497 / L2-TR) protein is FMN-dependent NADH:quinone oxidoreductase 1.